A 111-amino-acid polypeptide reads, in one-letter code: Ribonuclease P protein component (111 aa).

The protein belongs to the RnpA family. As to quaternary structure, consists of a catalytic RNA component (M1 or rnpB) and a protein subunit.

It catalyses the reaction Endonucleolytic cleavage of RNA, removing 5'-extranucleotides from tRNA precursor.. Functionally, RNaseP catalyzes the removal of the 5'-leader sequence from pre-tRNA to produce the mature 5'-terminus. It can also cleave other RNA substrates such as 4.5S RNA. The protein component plays an auxiliary but essential role in vivo by binding to the 5'-leader sequence and broadening the substrate specificity of the ribozyme. The chain is Ribonuclease P protein component from Borreliella afzelii (strain PKo) (Borrelia afzelii).